The sequence spans 154 residues: Transcriptional repressor NrdR (154 aa).

The segment at 3–34 (CPFCNHGELKVIDSRNAPESNAIKRRRECLRC) is a zinc-finger region. Residues 48-138 (VQVLKRDGRY…VYRRFKDVGE (91 aa)) form the ATP-cone domain.

This sequence belongs to the NrdR family. Zn(2+) serves as cofactor.

Functionally, negatively regulates transcription of bacterial ribonucleotide reductase nrd genes and operons by binding to NrdR-boxes. This is Transcriptional repressor NrdR from Chlamydia trachomatis serovar L2 (strain ATCC VR-902B / DSM 19102 / 434/Bu).